The sequence spans 490 residues: Lysine--tRNA ligase (490 aa).

Mg(2+)-binding residues include glutamate 400 and glutamate 407.

The protein belongs to the class-II aminoacyl-tRNA synthetase family. In terms of assembly, homodimer. Requires Mg(2+) as cofactor.

Its subcellular location is the cytoplasm. It carries out the reaction tRNA(Lys) + L-lysine + ATP = L-lysyl-tRNA(Lys) + AMP + diphosphate. This Mycoplasma genitalium (strain ATCC 33530 / DSM 19775 / NCTC 10195 / G37) (Mycoplasmoides genitalium) protein is Lysine--tRNA ligase (lysS).